The primary structure comprises 341 residues: Aromatic amino acid aminotransferase (341 aa).

Lys-213 is subject to N6-(pyridoxal phosphate)lysine.

The protein belongs to the class-II pyridoxal-phosphate-dependent aminotransferase family. As to quaternary structure, homodimer. Requires pyridoxal 5'-phosphate as cofactor.

The catalysed reaction is an aromatic L-alpha-amino acid + 2-oxoglutarate = an aromatic oxo-acid + L-glutamate. Aminotransferase that catalyzes the conversion of aromatic amino acids and 2-oxoglutarate into corresponding aromatic oxo acids and L-glutamate. May catalyze the transamination reaction in phenylalanine biosynthesis. This Corynebacterium glutamicum (strain ATCC 13032 / DSM 20300 / JCM 1318 / BCRC 11384 / CCUG 27702 / LMG 3730 / NBRC 12168 / NCIMB 10025 / NRRL B-2784 / 534) protein is Aromatic amino acid aminotransferase.